Consider the following 493-residue polypeptide: MTTVRTRIAPSPTGDPHVGTAYIALFNYCFAKQHGGEFILRIEDTDQLRSTRESEQQIFDALRWLGIEWNEGPDVGGPHGPYRQSERGEIYARYAKQLVDAGHAFYCFCTAEELEQMRAEQMARGETPRYDGRALLLSDEEVQRRLAAGEPHVIRMKVPSEGICVVPDMLRGDVEIPWDRMDMQVLMKNDGLPTYFLANVVDDHLMGITHVLRGEEWLPSAPKLIKLYEYFGWEQPKLCYMPLLRNPDKSKLSKRKNPTSVTFYERMGFMPEAMLNYLGRMGWSMPDEREKFSLAEMVEHFDLSRISLGGPIFDIEKLSWLNGQWLRELPVEEFAARVQKWAFNSDYMMKIAPHVQGRVETFSQIAPLGGFFFEGALKLDAKLFESKKLSADQVRQVMQLILWKLESLRQWEKERITGCIQAVVEALELKLRDAMPLMFAAITGQASSVSVLDAMEILGPDLTRYRLRQALDLLGGVSKKENKEWEKLLANIA.

Residues 10–20 carry the 'HIGH' region motif; it reads PSPTGDPHVGT. The 'KMSKS' region signature appears at 251 to 255; the sequence is KLSKR. Lys-254 is a binding site for ATP.

This sequence belongs to the class-I aminoacyl-tRNA synthetase family. Glutamate--tRNA ligase type 1 subfamily. As to quaternary structure, monomer.

It localises to the cytoplasm. The catalysed reaction is tRNA(Glu) + L-glutamate + ATP = L-glutamyl-tRNA(Glu) + AMP + diphosphate. Functionally, catalyzes the attachment of glutamate to tRNA(Glu) in a two-step reaction: glutamate is first activated by ATP to form Glu-AMP and then transferred to the acceptor end of tRNA(Glu). This chain is Glutamate--tRNA ligase, found in Pseudomonas putida (strain W619).